Reading from the N-terminus, the 210-residue chain is MSIVHPDTSKYEFNFEPFLRKEYSFSLDPDRPVCQYYNSREGIKSCPNGARCPNKHVLPIFQNKIVCKHWLRGLCKKNDQCEYLHEYNLRKMPECVFFTKNGYCTQSPECQYLHVDHKSQLEECEDYNMGFCPSGPACTKKHVKKVLCPRYLVGFCPLGKDCDWSHPKFKVPSEHSKLRIKKDEHINTRKMDEERERRLNAIINGDILVT.

5 C3H1-type zinc fingers span residues 28–59 (DPDRPVCQYYNSREGIKSCPNGARCPNKHVLP), 61–88 (FQNKIVCKHWLRGLCKKNDQCEYLHEYN), 89–117 (LRKMPECVFFTKNGYCTQSPECQYLHVDH), 118–142 (KSQLEECEDYNMGFCPSGPACTKKH), and 143–169 (VKKVLCPRYLVGFCPLGKDCDWSHPKF).

It belongs to the CPSF4/YTH1 family.

The protein resides in the nucleus. Functionally, component of the cleavage factor I (CF I) involved in pre-mRNA 3'-end processing. This chain is mRNA 3'-end-processing protein YTH1 (YTH1), found in Kluyveromyces lactis (strain ATCC 8585 / CBS 2359 / DSM 70799 / NBRC 1267 / NRRL Y-1140 / WM37) (Yeast).